Here is an 88-residue protein sequence, read N- to C-terminus: Elongation factor 1-beta (88 aa).

Belongs to the EF-1-beta/EF-1-delta family.

Functionally, promotes the exchange of GDP for GTP in EF-1-alpha/GDP, thus allowing the regeneration of EF-1-alpha/GTP that could then be used to form the ternary complex EF-1-alpha/GTP/AAtRNA. This Halobacterium salinarum (strain ATCC 29341 / DSM 671 / R1) protein is Elongation factor 1-beta.